The chain runs to 602 residues: Aspartate--tRNA(Asp/Asn) ligase (602 aa).

Residue E170 coordinates L-aspartate. Positions 194-197 (QLFK) are aspartate. R216 contacts L-aspartate. Residues 216–218 (RDE) and Q225 each bind ATP. H448 contacts L-aspartate. ATP is bound at residue E482. Residue R489 participates in L-aspartate binding. An ATP-binding site is contributed by 534–537 (GWDR). A disordered region spans residues 559-602 (GGVDPLTSAPAPITAQQRKESGVDAKPEPKGDAAAAKPQVSAEK). Positions 575-589 (QRKESGVDAKPEPKG) are enriched in basic and acidic residues.

This sequence belongs to the class-II aminoacyl-tRNA synthetase family. Type 1 subfamily. Homodimer.

The protein localises to the cytoplasm. The enzyme catalyses tRNA(Asx) + L-aspartate + ATP = L-aspartyl-tRNA(Asx) + AMP + diphosphate. In terms of biological role, aspartyl-tRNA synthetase with relaxed tRNA specificity since it is able to aspartylate not only its cognate tRNA(Asp) but also tRNA(Asn). Reaction proceeds in two steps: L-aspartate is first activated by ATP to form Asp-AMP and then transferred to the acceptor end of tRNA(Asp/Asn). The chain is Aspartate--tRNA(Asp/Asn) ligase from Rhodococcus opacus (strain B4).